The chain runs to 600 residues: DDB1- and CUL4-associated factor 15 (600 aa).

The disordered stretch occupies residues 1-29 (MAPSSKSERNSGAGSAGGGPGGTGGKRAV). Residues 14-27 (GSAGGGPGGTGGKR) are compositionally biased toward gly residues. Ser50 carries the post-translational modification Phosphoserine. Zn(2+)-binding residues include Cys193, Cys196, Cys211, and His214. At Ser314 the chain carries Phosphoserine. The segment covering 334–343 (AKGSPLEETR) has biased composition (basic and acidic residues). A disordered region spans residues 334 to 384 (AKGSPLEETRLPSSLGPSSSRCRPSLEPQAPSGEVVPRDSPPAAETTAPEP). Composition is skewed to low complexity over residues 344 to 359 (LPSSLGPSSSRCRPSL) and 374 to 384 (PPAAETTAPEP).

Component of the DCX(DCAF15) complex, also named CLR4(DCAF15) complex, composed of DCAF15, DDB1, cullin-4 (CUL4A or CUL4B), DDA1 and RBX1.

It participates in protein modification; protein ubiquitination. Functionally, substrate-recognition component of the DCX(DCAF15) complex, a cullin-4-RING E3 ubiquitin-protein ligase complex that mediates ubiquitination and degradation of target proteins. The DCX(DCAF15) complex acts as a regulator of the natural killer (NK) cells effector functions, possibly by mediating ubiquitination and degradation of cohesin subunits SMC1A and SMC3. May play a role in the activation of antigen-presenting cells (APC) and their interaction with NK cells. The polypeptide is DDB1- and CUL4-associated factor 15 (Mus musculus (Mouse)).